A 492-amino-acid polypeptide reads, in one-letter code: Trk system potassium uptake protein TrkI (492 aa).

The next 10 membrane-spanning stretches (helical) occupy residues 20 to 40, 47 to 67, 81 to 101, 143 to 163, 196 to 216, 246 to 266, 282 to 302, 334 to 354, 403 to 423, and 465 to 485; these read VLAV…LVLI, ALAF…SWIV, FVLT…PLVL, IMQW…LPFL, IYCG…MSPL, QLLW…VLYI, VQGL…WRVS, AWGA…GCSG, VVAF…GLSL, and WLLC…LVLL.

It belongs to the TrkH potassium transport family.

It localises to the cell inner membrane. In terms of biological role, medium-affinity potassium transport system. Probably interacts with Trk system potassium uptake protein TrkA. Main K(+) transporter in osmotically adapted cells. This Halomonas elongata (strain ATCC 33173 / DSM 2581 / NBRC 15536 / NCIMB 2198 / 1H9) protein is Trk system potassium uptake protein TrkI (trkI).